A 185-amino-acid polypeptide reads, in one-letter code: MIDEINVDARQRMEKSVLALRGQFTKIRTGRAHPSLLDSIMVPYYGAPTPLKQLANVIAEDSRTLALTVFDKSAAQAVEKAIMQSDLGLNPMSAGTVIRIPMPALTEERRKDLIRVVRNEAEGGRVAVRNIRRDANGDIKELLKEKEISEDDAHRGEDAIQKLTDEFVKQIDDILAAKETELMEV.

The protein belongs to the RRF family.

The protein resides in the cytoplasm. In terms of biological role, responsible for the release of ribosomes from messenger RNA at the termination of protein biosynthesis. May increase the efficiency of translation by recycling ribosomes from one round of translation to another. The sequence is that of Ribosome-recycling factor from Pseudoalteromonas atlantica (strain T6c / ATCC BAA-1087).